We begin with the raw amino-acid sequence, 728 residues long: MSNEAKCPFHHAAGNGTSNRDWWPDQLDLSALHRHSSLSDPMDRDFNYAQAFEKLDLAAVKRDLHALMTTSQDWWPADFGHYGGLFIRMAWHSAGTYRTADGRGGAGEGQQRFAPLNSWPDNANLDKARRLLWPIKQKYGRSISWADLLILTGNVALESMGFKTFGFAGGRADTWEPEDVYWGSEKIWLELSGGPNSRYSGDRQLENPLAAVQMGLIYVNPEGPDGNPDPVAAARDIRDTFARMAMNDEETVALIAGGHTFGKTHGAGPASNVGPEPEAAGLEEQGLGWKSAYGTGKGADAITSGLEVTWTKTPTQWSNNFFENLFGYEWELTKSPAGAHQWVAKDADAVIPDAFDPSKKHRPTMLTTDLSLRFDPAYEKISRRFHEHPDEFADAFARAWFKLTHRDMGPRARYLGPEVPAEELLWQDPIPAVDHPLIDAADVAALKAQVLASGLSVSQLVSTAWAAASTFRGSDKRGGANGARIRLAPQKDWEANQPEQLATVLATLEAIRRTFNGAQSGGKRVSLADLIVLAGCAGVEQAAKNAGHAVTVPFAPGRMDASQEQTDVESMAVLEPLADGFRNYLKGKYRVPAEVLLVDKAQLLTLSAPEMTVLLGGLRVLGANAGQSRHGVFTARAQALTNDFFVNLLDMSTEWKPASADADVFEGRDRATGALKWTGTRVDLVFGSHSQLRALAEVYASADAQEKFVRDFVAVWNKVMNLDRFDLA.

Residues 91-218 constitute a cross-link (tryptophyl-tyrosyl-methioninium (Trp-Tyr) (with M-244)); it reads WHSAGTYRTA…LAAVQMGLIY (128 aa). The active-site Proton acceptor is His92. Residues 218-244 constitute a cross-link (tryptophyl-tyrosyl-methioninium (Tyr-Met) (with W-91)); it reads YVNPEGPDGNPDPVAAARDIRDTFARM. His259 contacts heme b.

The protein belongs to the peroxidase family. Peroxidase/catalase subfamily. In terms of assembly, homodimer or homotetramer. Heme b serves as cofactor. In terms of processing, formation of the three residue Trp-Tyr-Met cross-link is important for the catalase, but not the peroxidase activity of the enzyme.

The catalysed reaction is H2O2 + AH2 = A + 2 H2O. It catalyses the reaction 2 H2O2 = O2 + 2 H2O. Functionally, bifunctional enzyme with both catalase and broad-spectrum peroxidase activity. This Burkholderia thailandensis (strain ATCC 700388 / DSM 13276 / CCUG 48851 / CIP 106301 / E264) protein is Catalase-peroxidase.